The chain runs to 155 residues: SsrA-binding protein (155 aa).

Residues 127–149 show a composition bias toward basic and acidic residues; the sequence is KKDYDKRNDMRKKEAKREMERTF. The tract at residues 127–155 is disordered; the sequence is KKDYDKRNDMRKKEAKREMERTFKSKNQY.

The protein belongs to the SmpB family.

The protein resides in the cytoplasm. Functionally, required for rescue of stalled ribosomes mediated by trans-translation. Binds to transfer-messenger RNA (tmRNA), required for stable association of tmRNA with ribosomes. tmRNA and SmpB together mimic tRNA shape, replacing the anticodon stem-loop with SmpB. tmRNA is encoded by the ssrA gene; the 2 termini fold to resemble tRNA(Ala) and it encodes a 'tag peptide', a short internal open reading frame. During trans-translation Ala-aminoacylated tmRNA acts like a tRNA, entering the A-site of stalled ribosomes, displacing the stalled mRNA. The ribosome then switches to translate the ORF on the tmRNA; the nascent peptide is terminated with the 'tag peptide' encoded by the tmRNA and targeted for degradation. The ribosome is freed to recommence translation, which seems to be the essential function of trans-translation. The polypeptide is SsrA-binding protein (Lysinibacillus sphaericus (strain C3-41)).